A 496-amino-acid chain; its full sequence is 1-aminocyclopropane-1-carboxylate synthase 2 (496 aa).

Substrate is bound by residues glutamate 55 and tyrosine 93. Lysine 279 carries the N6-(pyridoxal phosphate)lysine modification. Residues serine 483, serine 488, and serine 491 each carry the phosphoserine modification.

This sequence belongs to the class-I pyridoxal-phosphate-dependent aminotransferase family. As to quaternary structure, homodimer and heterodimer. In vivo, the relevance of heterodimerization with other ACS enzymes is however unsure. Interacts with GRF3. It depends on pyridoxal 5'-phosphate as a cofactor. Post-translationally, phosphorylated on serine residue by MAP kinase (MPK6). May be processed at its C-terminus. High in developing leaves and in flowers. Expressed in roots and siliques.

It carries out the reaction S-adenosyl-L-methionine = 1-aminocyclopropane-1-carboxylate + S-methyl-5'-thioadenosine + H(+). It participates in alkene biosynthesis; ethylene biosynthesis via S-adenosyl-L-methionine; ethylene from S-adenosyl-L-methionine: step 1/2. Functionally, 1-aminocyclopropane-1-carboxylate synthase (ACS) enzymes catalyze the conversion of S-adenosyl-L-methionine (SAM) into 1-aminocyclopropane-1-carboxylate (ACC), a direct precursor of ethylene. This chain is 1-aminocyclopropane-1-carboxylate synthase 2 (ACS2), found in Arabidopsis thaliana (Mouse-ear cress).